Consider the following 267-residue polypeptide: Probable aquaporin TIP3-2 (267 aa).

Met1 carries the post-translational modification N-acetylmethionine. Ala2 carries the N-acetylalanine; in Probable aquaporin TIP3-2, N-terminally processed modification. Residues 2–26 (ATSARRAYGFGRADEATHPDSIRAT) are Cytoplasmic-facing. Residues 27 to 47 (LAEFLSTFVFVFAGEGSILAL) form a helical membrane-spanning segment. At 48 to 66 (DKLYWDTAAHTGTNTPGGL) the chain is on the vacuolar side. Residues 67-87 (VLVALAHALALFAAVSAAINV) traverse the membrane as a helical segment. Topologically, residues 88 to 110 (SGGHVNPAVTFAALIGGRISVIR) are cytoplasmic. Positions 93–95 (NPA) match the NPA 1 motif. Residues 111-131 (AIYYWVAQLIGAILACLLLRL) traverse the membrane as a helical segment. At 132-151 (ATNGLRPVGFHVASGVSELH) the chain is on the vacuolar side. A helical membrane pass occupies residues 152 to 172 (GLLMEIILTFALVYVVYSTAI). The Cytoplasmic segment spans residues 173–178 (DPKRGS). Residues 179–199 (IGIIAPLAIGLIVGANILVGG) form a helical membrane-spanning segment. Topologically, residues 200 to 226 (PFDGASMNPARAFGPALVGWRWSNHWI) are vacuolar. Positions 207–209 (NPA) match the NPA 2 motif. A helical transmembrane segment spans residues 227–247 (YWVGPFIGGALAALIYEYMII). Over 248–267 (PSVNEPPHHSTHQPLAPEDY) the chain is Cytoplasmic.

It belongs to the MIP/aquaporin (TC 1.A.8) family. TIP (TC 1.A.8.10) subfamily. In terms of tissue distribution, predominantly expressed in developing seeds. Also expressed in rosette leaves.

Its subcellular location is the vacuole membrane. Aquaporins facilitate the transport of water and small neutral solutes across cell membranes. This Arabidopsis thaliana (Mouse-ear cress) protein is Probable aquaporin TIP3-2 (TIP3-2).